The chain runs to 314 residues: Malate dehydrogenase (314 aa).

NAD(+)-binding positions include 11 to 16 and Asp-35; that span reads GSGNIG. Arg-84 and Arg-90 together coordinate substrate. Residues Asn-97 and 120–122 each bind NAD(+); that span reads ITN. Substrate contacts are provided by Asn-122 and Arg-153. His-177 acts as the Proton acceptor in catalysis.

This sequence belongs to the LDH/MDH superfamily. MDH type 3 family.

It catalyses the reaction (S)-malate + NAD(+) = oxaloacetate + NADH + H(+). In terms of biological role, catalyzes the reversible oxidation of malate to oxaloacetate. This is Malate dehydrogenase from Rickettsia africae (strain ESF-5).